The primary structure comprises 283 residues: Putative casein kinase II subunit beta-4 (283 aa).

Disordered regions lie at residues 1–23 and 35–92; these read MYKD…EILG and LDKH…SEGD. The span at 7 to 16 shows a compositional bias: gly residues; that stretch reads GGGIMGGGGS. Positions 58 to 70 are enriched in polar residues; it reads VPSTSTAKSQLHS.

The protein belongs to the casein kinase 2 subunit beta family. As to quaternary structure, heterotetramer of two catalytic alpha subunits and two regulatory beta subunits. In terms of processing, phosphorylated by alpha subunit.

It localises to the cytoplasm. Its subcellular location is the cytosol. Plays a complex role in regulating the basal catalytic activity of the alpha subunit. The tetrameric holoenzyme CK2, composed of two alpha and two beta subunits, phosphorylates the transcription factor PIF1 after an exposure to light, resulting in a proteasome-dependent degradation of PIF1 and promotion of photomorphogenesis. CK2 phosphorylates translation initiation factors. May participate in the regulation of the initiation of translation. This chain is Putative casein kinase II subunit beta-4, found in Arabidopsis thaliana (Mouse-ear cress).